Here is a 267-residue protein sequence, read N- to C-terminus: Rhomboid-type serine protease 2 (267 aa).

A run of 6 helical transmembrane segments spans residues 20–40 (LPLFTRLIVLAIIALSIASLQ), 67–87 (FPLIHLNVIHAILNLLALTPL), 99–119 (TSLALFFGPLTSIPAVAYVLI), 126–146 (ANHGVLGASMWVFTLLAMESI), 155–179 (FVIGSVNIPTWTTPLIMSLVVAALI), and 185–206 (LGHLCGIAIGYVAGFGYAKLLA). Catalysis depends on Ser134, which acts as the Nucleophile. Residue His187 is part of the active site. The segment at 247–267 (RPGPSGSAATELVGTTQRLGP) is disordered.

The protein belongs to the peptidase S54 family.

Its subcellular location is the golgi apparatus membrane. It is found in the golgi apparatus. It localises to the cis-Golgi network membrane. It carries out the reaction Cleaves type-1 transmembrane domains using a catalytic dyad composed of serine and histidine that are contributed by different transmembrane domains.. In terms of biological role, probable rhomboid-type serine protease that catalyzes intramembrane proteolysis. The polypeptide is Rhomboid-type serine protease 2 (RBD2) (Gibberella zeae (strain ATCC MYA-4620 / CBS 123657 / FGSC 9075 / NRRL 31084 / PH-1) (Wheat head blight fungus)).